Reading from the N-terminus, the 778-residue chain is MGTPAERSVSEVCRCEPDPGLEGEGWGSDTHAEPSNTPIPLPVANKKKKRKKKLWINLTNCKYESVRRAARRYGIREAAEGEDWTLYWTDCSVSLDRVMDMKRYQKINHFPGMNEICRKDLLARNMNRMLKLFPKEYNIFPRTWCLPADYSDFQAYTRAKKHKTFICKPDSGCQGRGIYLTKSSKDIRPGEHMICQVYMSKPFIIDGFKFDLRIYVLVTSCDPFRVFMYDEGLVRFCTTHYTEPTVSNLEDVCMHLTNYAINKHSENFVRDEDTGSKRKLSSFKKHMEDMSYDTEKLWTDIEDAIIKTLISAHPILKHNYQTCFPNHASGSACFEILGFDVLLDRRLKPWLLEVNHSPSFTTDSRLDREVKDSLLYDTLVLINLGACDRRKITEEEKRRVKERLQQNRSREARNEEPRQSQAASMELMQKYEAKHMGGFRRIFPRDGGEKYEKYFQHSSSLFQETAASKAREECARQQLQELRLKQEQKERDKKGSRKQDLQGESAGEKVKPRKSQPPHKTSNSLPAMLELSSVREETPVSLERIEKEEAERVRELQQRETLLLNMGVVNQVRQLLQSANRLTQCINHSHEQASFPPHCRHDHKLDTLAEISWRQKNIYSTMQHQILARNRPSLPNVHSQTLQNRKPWPSLEHGLLQPVQTQAAALKHYGLEEMVASNAEEQANLIKATSAQQIPLTINGSFIWRQGSLSSSLAESRARATMLAMPPLGPGRLHRPTIFHDPNSLSIISTPAPLVPRPHLSHDLRKAPRRVLPHEHSL.

The segment at 1 to 43 (MGTPAERSVSEVCRCEPDPGLEGEGWGSDTHAEPSNTPIPLPV) is disordered. The 343-residue stretch at 51–393 (KKKLWINLTN…LGACDRRKIT (343 aa)) folds into the TTL domain. ATP contacts are provided by residues lysine 168, 174–175 (QG), 196–199 (QVYM), and 209–211 (KFD). Position 174 (glutamine 174) interacts with a protein. Position 235 (arginine 235) interacts with L-glutamate. Residue 257-258 (TN) coordinates ATP. Residues tyrosine 259 and lysine 277 each coordinate L-glutamate. The Mg(2+) site is built by aspartate 340, glutamate 353, and asparagine 355. Histidine 356 lines the a protein pocket. Positions 365 to 445 (RLDREVKDSL…MGGFRRIFPR (81 aa)) are c-MTBD region. Lysine 371 serves as a coordination point for L-glutamate. Composition is skewed to basic and acidic residues over residues 402–418 (ERLQQNRSREARNEEPR), 485–510 (KQEQKERDKKGSRKQDLQGESAGEKV), 533–542 (SVREETPVSL), and 760–778 (LSHDLRKAPRRVLPHEHSL). Disordered stretches follow at residues 402–422 (ERLQQNRSREARNEEPRQSQA), 485–542 (KQEQ…PVSL), and 758–778 (PHLSHDLRKAPRRVLPHEHSL).

It belongs to the tubulin--tyrosine ligase family. Requires Mg(2+) as cofactor.

It is found in the cytoplasm. Its subcellular location is the cytoskeleton. It localises to the cilium axoneme. The protein resides in the cilium basal body. It catalyses the reaction L-glutamyl-[protein] + L-glutamate + ATP = gamma-L-glutamyl-L-glutamyl-[protein] + ADP + phosphate + H(+). The enzyme catalyses (L-glutamyl)(n)-gamma-L-glutamyl-L-glutamyl-[protein] + L-glutamate + ATP = (L-glutamyl)(n+1)-gamma-L-glutamyl-L-glutamyl-[protein] + ADP + phosphate + H(+). Functionally, polyglutamylase which modifies both tubulin and non-tubulin proteins, generating alpha-linked polyglutamate side chains on the gamma-carboxyl group of specific glutamate residues of target proteins. Preferentially mediates ATP-dependent long polyglutamate chain elongation over the initiation step of the polyglutamylation reaction. Preferentially modifies the alpha-tubulin tail over a beta-tail. Mediates microtubule polyglutamylation in cilia axoneme, which is important for ciliary structural formation and motility. Polyglutamylates olfactory cilia, necessary for the regulation of ciliary structure and beating. The polypeptide is Tubulin polyglutamylase ttll6 (Danio rerio (Zebrafish)).